The primary structure comprises 434 residues: G2/mitotic-specific cyclin-2 (434 aa).

It belongs to the cyclin family. Cyclin AB subfamily. As to quaternary structure, interacts with the CDC2 protein kinase to form a serine/threonine kinase holoenzyme complex also known as maturation promoting factor (MPF). The cyclin subunit imparts substrate specificity to the complex.

Essential for the control of the cell cycle at the G2/M (mitosis) transition. This Medicago sativa subsp. varia (Alfalfa) protein is G2/mitotic-specific cyclin-2.